The sequence spans 735 residues: MMDGAQTNSGGCPVMHGGGSRPMGATANQHWWPNQLNLKPLSANSEKLDPMGEGFDYAEEFQKLDMAAVKADIANCLKDSQDWWPADYGHYGPLMIRLAWHSAGTYRTYDGRGGAGTGTQRFAPLNSWPDNGNLDKARRILWPIKEKYGKSLSWADLLILVGNVALEDMGFETFGFAGGRADVWEPEEDIYWGPETEWLATSDMENTRYGEGRDLHNPLAAVQMGLIYVNPQGPDGNPDPLASAFDIRDTFARMAMNDEETVALVAGGHTFGKAHGAGDPDLVGAEPEGADVAEMGLGWKNGFESGKGVHSTTSGVEGPWTPTPTQWDMSYFDVLFGHEWELTKSPAGAHQWRPVDHENDQAPQVDGNGTVPIMMTTADMAMRMDPAYEKISRDFHANPDKFADAFARAWYKLTHRDMGPIQRYLGNDVPSEELLWQDPVPMPQGPQVNDDEQAELKAAVAATGLTAAELVRVAWGSAASYRDSDKRGGANGARIRLQPARGWTVNNPEELDKVLPVLDSIADAFNGRGGTQITMADMIVLAGGVGVEMAAREAGHNIHVPFTPGRGDATQEQTDVDSYDVLEPTSDGFRNYHATFSLREPAEMLVDKAALLGLTAPEMTVLVGGLRAIGATHGGARHGVLTETPGALNNAFFKNVLSMDTVWNQTDSAILEGKDRASGQVKWTATIVDLVFGSNSQLRAVAEVYASADAEAKMVDDFVAAWVKVMENDRFDLHR.

The span at 1 to 10 (MMDGAQTNSG) shows a compositional bias: polar residues. Positions 1–20 (MMDGAQTNSGGCPVMHGGGS) are disordered. The tryptophyl-tyrosyl-methioninium (Trp-Tyr) (with M-254) cross-link spans 100–228 (WHSAGTYRTY…LAAVQMGLIY (129 aa)). His101 serves as the catalytic Proton acceptor. Residues 228 to 254 (YVNPQGPDGNPDPLASAFDIRDTFARM) constitute a cross-link (tryptophyl-tyrosyl-methioninium (Tyr-Met) (with W-100)). His269 serves as a coordination point for heme b.

The protein belongs to the peroxidase family. Peroxidase/catalase subfamily. As to quaternary structure, homodimer or homotetramer. Heme b serves as cofactor. Formation of the three residue Trp-Tyr-Met cross-link is important for the catalase, but not the peroxidase activity of the enzyme.

It carries out the reaction H2O2 + AH2 = A + 2 H2O. It catalyses the reaction 2 H2O2 = O2 + 2 H2O. Bifunctional enzyme with both catalase and broad-spectrum peroxidase activity. This chain is Catalase-peroxidase, found in Jannaschia sp. (strain CCS1).